Consider the following 353-residue polypeptide: Phosphate acyltransferase (353 aa).

It belongs to the PlsX family. As to quaternary structure, homodimer. Probably interacts with PlsY.

The protein localises to the cytoplasm. The catalysed reaction is a fatty acyl-[ACP] + phosphate = an acyl phosphate + holo-[ACP]. Its pathway is lipid metabolism; phospholipid metabolism. In terms of biological role, catalyzes the reversible formation of acyl-phosphate (acyl-PO(4)) from acyl-[acyl-carrier-protein] (acyl-ACP). This enzyme utilizes acyl-ACP as fatty acyl donor, but not acyl-CoA. This chain is Phosphate acyltransferase, found in Agrobacterium fabrum (strain C58 / ATCC 33970) (Agrobacterium tumefaciens (strain C58)).